The following is a 566-amino-acid chain: Urease subunit alpha (566 aa).

A Urease domain is found at G128–F566. The Ni(2+) site is built by H133, H135, and K216. At K216 the chain carries N6-carboxylysine. H218 provides a ligand contact to substrate. 2 residues coordinate Ni(2+): H245 and H271. Catalysis depends on H319, which acts as the Proton donor. D359 contacts Ni(2+).

Belongs to the metallo-dependent hydrolases superfamily. Urease alpha subunit family. As to quaternary structure, may form a heterohexamer of 3 UreC (alpha) and 3 UreAB (gamma/beta) subunits. May also form a heterotrimer of UreA (gamma), UreB (beta) and UreC (alpha) subunits. Three heterotrimers associate to form the active enzyme. Ni cation is required as a cofactor. Post-translationally, carboxylation allows a single lysine to coordinate two nickel ions.

Its subcellular location is the cytoplasm. The enzyme catalyses urea + 2 H2O + H(+) = hydrogencarbonate + 2 NH4(+). The protein operates within nitrogen metabolism; urea degradation; CO(2) and NH(3) from urea (urease route): step 1/1. The sequence is that of Urease subunit alpha from Pseudomonas savastanoi pv. phaseolicola (strain 1448A / Race 6) (Pseudomonas syringae pv. phaseolicola (strain 1448A / Race 6)).